The following is a 247-amino-acid chain: Hydroxyacylglutathione hydrolase 1 (247 aa).

Residues histidine 54, histidine 56, aspartate 58, histidine 59, histidine 111, aspartate 128, and histidine 165 each coordinate Zn(2+).

It belongs to the metallo-beta-lactamase superfamily. Glyoxalase II family. Monomer. The cofactor is Zn(2+).

It carries out the reaction an S-(2-hydroxyacyl)glutathione + H2O = a 2-hydroxy carboxylate + glutathione + H(+). The protein operates within secondary metabolite metabolism; methylglyoxal degradation; (R)-lactate from methylglyoxal: step 2/2. Thiolesterase that catalyzes the hydrolysis of S-D-lactoyl-glutathione to form glutathione and D-lactic acid. The chain is Hydroxyacylglutathione hydrolase 1 from Vibrio vulnificus (strain YJ016).